The chain runs to 178 residues: Cytochrome b6-f complex iron-sulfur subunit 3 (178 aa).

Residues phenylalanine 20–isoleucine 42 traverse the membrane as a helical segment. The region spanning proline 65–isoleucine 161 is the Rieske domain. 4 residues coordinate [2Fe-2S] cluster: cysteine 107, histidine 109, cysteine 125, and histidine 128. A disulfide bond links cysteine 112 and cysteine 127.

This sequence belongs to the Rieske iron-sulfur protein family. In terms of assembly, the 4 large subunits of the cytochrome b6-f complex are cytochrome b6, subunit IV (17 kDa polypeptide, PetD), cytochrome f and the Rieske protein, while the 4 small subunits are PetG, PetL, PetM and PetN. The complex functions as a dimer. It depends on [2Fe-2S] cluster as a cofactor.

It is found in the cellular thylakoid membrane. It carries out the reaction 2 oxidized [plastocyanin] + a plastoquinol + 2 H(+)(in) = 2 reduced [plastocyanin] + a plastoquinone + 4 H(+)(out). Functionally, component of the cytochrome b6-f complex, which mediates electron transfer between photosystem II (PSII) and photosystem I (PSI), cyclic electron flow around PSI, and state transitions. The protein is Cytochrome b6-f complex iron-sulfur subunit 3 of Nostoc sp. (strain PCC 7120 / SAG 25.82 / UTEX 2576).